The chain runs to 517 residues: Gamma-1-syntrophin (517 aa).

A PDZ domain is found at 57-140 (TVTIRRQTVG…EVTLTVSFLK (84 aa)). Residues 283–390 (QIVYMGWCEA…WERAFQTATF (108 aa)) enclose the PH domain.

Belongs to the syntrophin family. Interacts with the dystrophin protein DMD and related proteins DTNA and DTNB. Interacts with DGKZ.

The protein localises to the cytoplasm. Its subcellular location is the cytoskeleton. The protein resides in the nucleus. Its function is as follows. Adapter protein that binds to and probably organizes the subcellular localization of a variety of proteins. May link various receptors to the actin cytoskeleton and the dystrophin glycoprotein complex. May participate in regulating the subcellular location of diacylglycerol kinase-zeta to ensure that diacylglycerol is rapidly inactivated following receptor activation. This Mus musculus (Mouse) protein is Gamma-1-syntrophin (Sntg1).